A 469-amino-acid chain; its full sequence is GDNF family receptor alpha-1 (469 aa).

Positions 1–27 are cleaved as a signal peptide; sequence MFLALLYLALPLADVLLSAEVSGLPGG. 3 tandem repeats follow at residues 28–116, 149–237, and 238–341. Cysteines 39 and 45 form a disulfide. 2 N-linked (GlcNAc...) asparagine glycosylation sites follow: N62 and N163. 10 disulfides stabilise this stretch: C153–C213, C160–C166, C177–C191, C186–C232, C215–C220, C242–C312, C249–C255, C266–C284, C276–C336, and C314–C324. Residues N346 and N405 are each glycosylated (N-linked (GlcNAc...) asparagine). A lipid anchor (GPI-anchor amidated serine) is attached at S430. A propeptide spans 431–469 (removed in mature form); sequence HISSENSFALPTSFYPSTPLILMTIALSLFLFLSSSVVL.

It belongs to the GDNFR family. Interacts with GDNF ligand and RET: forms a 2:2:2 ternary complex composed of GDNF ligand, GFRA1 and RET receptor.

The protein localises to the cell membrane. It localises to the golgi apparatus. Its subcellular location is the trans-Golgi network. The protein resides in the endosome. It is found in the multivesicular body. Functionally, coreceptor for GDNF, a neurotrophic factor that enhances survival and morphological differentiation of dopaminergic neurons and increases their high-affinity dopamine uptake. GDNF-binding leads to autophosphorylation and activation of the RET receptor. The protein is GDNF family receptor alpha-1 (GFRA1) of Gallus gallus (Chicken).